Here is a 198-residue protein sequence, read N- to C-terminus: Sorcin (198 aa).

4 consecutive EF-hand domains span residues 45–64 (QDGQIDADELQRCLTQSGIA), 70–98 (FNLETCRLMVSMLDRDMSGTMGFNEFKEL), 100–135 (AVLNGWRQHFISFDSDRSGTVDPQELQKALTTMGFR), and 151–169 (SGKITFDDYIACCVKLRAL). Ca(2+) contacts are provided by Asp-83, Asp-85, Ser-87, Thr-89, Glu-94, Asp-113, Asp-115, Ser-117, Thr-119, and Glu-124. The residue at position 178 (Ser-178) is a Phosphoserine.

Homodimer. Interacts with GCA, RYR2 and ANXA7. In terms of tissue distribution, detected in cardiac myocytes.

The protein resides in the cytoplasm. It localises to the sarcoplasmic reticulum membrane. Functionally, calcium-binding protein that modulates excitation-contraction coupling in the heart. Contributes to calcium homeostasis in the heart sarcoplasmic reticulum. Modulates the activity of RYR2 calcium channels. This Mus musculus (Mouse) protein is Sorcin (Sri).